A 782-amino-acid chain; its full sequence is Coiled-coil alpha-helical rod protein 1 (782 aa).

2 stretches are compositionally biased toward basic and acidic residues: residues 62 to 74 (ERDV…EPGR) and 208 to 218 (ETRRAGEAKEL). Disordered regions lie at residues 62-82 (ERDV…WGLE) and 177-218 (EQLS…AKEL). Coiled coils occupy residues 82-314 (EGSQ…ELTR), 344-437 (LMVQ…NAVS), and 498-691 (VADV…QQEG).

It is found in the cytoplasm. The protein localises to the nucleus. Functionally, may be a regulator of keratinocyte proliferation or differentiation. In Pan troglodytes (Chimpanzee), this protein is Coiled-coil alpha-helical rod protein 1 (CCHCR1).